The primary structure comprises 451 residues: Chromosomal replication initiator protein DnaA 2 (451 aa).

The domain I, interacts with DnaA modulators stretch occupies residues methionine 1–lysine 68. Positions lysine 68 to aspartate 104 are domain II. A domain III, AAA+ region region spans residues glutamate 105–leucine 326. ATP contacts are provided by glycine 156, glycine 158, lysine 159, and threonine 160. A domain IV, binds dsDNA region spans residues histidine 327 to glycine 451.

Belongs to the DnaA family. As to quaternary structure, oligomerizes as a right-handed, spiral filament on DNA at oriC.

It localises to the cytoplasm. Its function is as follows. Plays an essential role in the initiation and regulation of chromosomal replication. ATP-DnaA binds to the origin of replication (oriC) to initiate formation of the DNA replication initiation complex once per cell cycle. Binds the DnaA box (a 9 base pair repeat at the origin) and separates the double-stranded (ds)DNA. Forms a right-handed helical filament on oriC DNA; dsDNA binds to the exterior of the filament while single-stranded (ss)DNA is stabiized in the filament's interior. The ATP-DnaA-oriC complex binds and stabilizes one strand of the AT-rich DNA unwinding element (DUE), permitting loading of DNA polymerase. After initiation quickly degrades to an ADP-DnaA complex that is not apt for DNA replication. Binds acidic phospholipids. The chain is Chromosomal replication initiator protein DnaA 2 from Protochlamydia amoebophila (strain UWE25).